A 274-amino-acid polypeptide reads, in one-letter code: Large ribosomal subunit protein uL2 (274 aa).

The tract at residues 223-265 is disordered; that stretch reads VVMNPVDHPHGGGEGRTSGGRHPVSPWGVPTKGYKTRSNKRTD.

It belongs to the universal ribosomal protein uL2 family. As to quaternary structure, part of the 50S ribosomal subunit. Forms a bridge to the 30S subunit in the 70S ribosome.

Its function is as follows. One of the primary rRNA binding proteins. Required for association of the 30S and 50S subunits to form the 70S ribosome, for tRNA binding and peptide bond formation. It has been suggested to have peptidyltransferase activity; this is somewhat controversial. Makes several contacts with the 16S rRNA in the 70S ribosome. The sequence is that of Large ribosomal subunit protein uL2 from Vibrio vulnificus (strain CMCP6).